Reading from the N-terminus, the 285-residue chain is BAG family molecular chaperone regulator 2 (285 aa).

Residues 37-113 enclose the Ubiquitin-like domain; that stretch reads RGIRVRVKYG…LILIEDPISQ (77 aa). One can recognise a BAG domain in the interval 132-210; that stretch reads AISDISFQVE…KYVEALDLLK (79 aa). Serine 244 is modified (phosphoserine).

As to quaternary structure, binds to the ATPase domain of HSP70/HSC70 chaperones.

Its function is as follows. Co-chaperone that regulates diverse cellular pathways, such as programmed cell death and stress responses. The chain is BAG family molecular chaperone regulator 2 (BAG2) from Arabidopsis thaliana (Mouse-ear cress).